The sequence spans 1942 residues: Probable helicase with zinc finger domain (1942 aa).

The C3H1-type zinc-finger motif lies at 178 to 206 (SEEYTLCKRFLEQGICRYGAQCTSAHSQE). Position 248 is a phosphoserine (serine 248). 668–675 (GPYGTGKT) provides a ligand contact to ATP. A DEAA box motif is present at residues 794–797 (DEAA). The span at 1117 to 1127 (SGSTNKQQQSP) shows a compositional bias: polar residues. The interval 1117 to 1141 (SGSTNKQQQSPPKGKSLHHTQNDHF) is disordered. Threonine 1163 is subject to Phosphothreonine. At arginine 1245 the chain carries Omega-N-methylarginine. Disordered stretches follow at residues 1246-1345 (GSPI…INLP), 1386-1429 (NLPE…GPNN), 1527-1552 (QGSA…GLHQ), and 1608-1637 (RQVQ…FNDN). 2 stretches are compositionally biased toward basic and acidic residues: residues 1268–1281 (HQEK…RNGK) and 1292–1308 (NKIR…KQVD). The span at 1399 to 1412 (NQVVQQQSQLNQQP) shows a compositional bias: low complexity. Residue serine 1614 is modified to Phosphoserine. Low complexity predominate over residues 1623-1636 (SSTDHSSHFSNFND). 4 positions are modified to phosphoserine: serine 1645, serine 1738, serine 1741, and serine 1766. Disordered regions lie at residues 1729-1779 (FHPL…TPQD), 1792-1843 (NQSS…PEDQ), and 1870-1942 (MPNK…SYFK). Low complexity predominate over residues 1731–1745 (PLSSRTVSSSSLPSL). 2 stretches are compositionally biased toward polar residues: residues 1761–1779 (RISS…TPQD) and 1792–1825 (NQSS…SRTA). Composition is skewed to low complexity over residues 1876 to 1888 (AESA…QSSA) and 1920 to 1942 (LSLF…SYFK).

This sequence belongs to the DNA2/NAM7 helicase family. In terms of assembly, interacts with SMYD2. Interacts with POLR2A. Interacts with SMYD3; the interaction may bridge SMYD3 and RNA polymerase II. Expressed predominantly in thymus and brain. Expression is down-regulated in 28 of 95 tested cancer cell lines.

It is found in the nucleus. Its function is as follows. May act as a helicase that plays a role in RNA metabolism in multiple tissues and organs within the developing embryo. This is Probable helicase with zinc finger domain (HELZ) from Homo sapiens (Human).